Here is a 256-residue protein sequence, read N- to C-terminus: 1-(5-phosphoribosyl)-5-[(5-phosphoribosylamino)methylideneamino] imidazole-4-carboxamide isomerase (256 aa).

The active-site Proton acceptor is the Asp-8. Asp-130 functions as the Proton donor in the catalytic mechanism.

Belongs to the HisA/HisF family.

It localises to the cytoplasm. The enzyme catalyses 1-(5-phospho-beta-D-ribosyl)-5-[(5-phospho-beta-D-ribosylamino)methylideneamino]imidazole-4-carboxamide = 5-[(5-phospho-1-deoxy-D-ribulos-1-ylimino)methylamino]-1-(5-phospho-beta-D-ribosyl)imidazole-4-carboxamide. It functions in the pathway amino-acid biosynthesis; L-histidine biosynthesis; L-histidine from 5-phospho-alpha-D-ribose 1-diphosphate: step 4/9. This Chlorobium phaeobacteroides (strain DSM 266 / SMG 266 / 2430) protein is 1-(5-phosphoribosyl)-5-[(5-phosphoribosylamino)methylideneamino] imidazole-4-carboxamide isomerase.